The following is an 84-amino-acid chain: uncharacterized protein (84 aa).

To M.jannaschii MJ1121.

This is an uncharacterized protein from Archaeoglobus fulgidus (strain ATCC 49558 / DSM 4304 / JCM 9628 / NBRC 100126 / VC-16).